The sequence spans 635 residues: MHGLLLAAGLLSLPLHVLAHPQPSTSTSLAGRAGAVDLNEFRVAHRSSYTSHDEMKKLPSIASFRQGTYLEVATELVKQTMPNMEFRLVDDHYVGDSGIGHVRFRQTMHGIDIDNSDFNVNVGKDGKVLSHGNSFYTGPAPSSNPMVKRDFIDPMQALHGVRKALNLPIKADGAHVEDMSEHKVMFKGTSGALSDPTAKLCYMAKEDGSLALTWRVETDIGDNWLLSYMDAKESSKVHNVVDYVAHATFQVYKWGLADPTEGKREILTNPWNLKTSPLTWLSDGQNNYTATRGNNAIAQYNPDGGSDYENNYRPSPKNLKFEYPYSPDMNPPKTYIDASVTELFYTSNVCHDLYYMLGFNEKAGNFQVNNRGQGGKGNDFVILNAQDGSGTNNANFATPPDGQPGRMRAYIWTRANPPRDASFEAGTIIHEYTHGLSNRLCGGPANSRCLNAIESGGMGEGWGDFYATAVRLKPNDTRKTNYVKGGWVNNSPKGVRMYPYSTDMNVNPLVYTSNNKLNEVHAIGTVWCTMLYEVLWNLIDKHGKNDGPVPIFENGVPNDGKYLAMKIVMDGMAIQPCNPNFVQARDAILDADMNLTKGANKCEIWKGFAKRGLGVGAKFDPKNRTGSTQVPNECK.

The signal sequence occupies residues 1-19; the sequence is MHGLLLAAGLLSLPLHVLA. Residues 20-246 constitute a propeptide that is removed on maturation; it reads HPQPSTSTSL…VHNVVDYVAH (227 aa). An N-linked (GlcNAc...) asparagine glycan is attached at Asn-287. His-430 serves as a coordination point for Zn(2+). Residue Glu-431 is part of the active site. His-434 contacts Zn(2+). Asn-475, Asn-594, and Asn-623 each carry an N-linked (GlcNAc...) asparagine glycan.

This sequence belongs to the peptidase M36 family. Zn(2+) is required as a cofactor.

It localises to the secreted. Functionally, secreted metalloproteinase probably acting as a virulence factor. In Arthroderma benhamiae (strain ATCC MYA-4681 / CBS 112371) (Trichophyton mentagrophytes), this protein is Probable extracellular metalloproteinase 1 (MEP1).